The following is a 279-amino-acid chain: Acyl-coenzyme A thioesterase MBLAC2 (279 aa).

Ser-2 is subject to N-acetylserine. Zn(2+)-binding residues include His-83, His-85, Asp-87, His-88, His-170, Asp-189, and His-231. Cys-254 carries the S-palmitoyl cysteine lipid modification.

This sequence belongs to the metallo-beta-lactamase superfamily. Glyoxalase II family. The cofactor is Zn(2+). In terms of processing, palmitoylated on Cys-254 by ZDHHC20.

It localises to the endoplasmic reticulum membrane. Its subcellular location is the cell membrane. The enzyme catalyses hexadecanoyl-CoA + H2O = hexadecanoate + CoA + H(+). It catalyses the reaction dodecanoyl-CoA + H2O = dodecanoate + CoA + H(+). The catalysed reaction is tetradecanoyl-CoA + H2O = tetradecanoate + CoA + H(+). It carries out the reaction octadecanoyl-CoA + H2O = octadecanoate + CoA + H(+). The enzyme catalyses a beta-lactam + H2O = a substituted beta-amino acid. Beta-lactamase activity is inhibited by sulbactam. In terms of biological role, acyl-CoA thioesterases are a group of enzymes that catalyze the hydrolysis of acyl-CoAs to the free fatty acid and coenzyme A (CoASH), providing the potential to regulate intracellular levels of acyl-CoAs, free fatty acids and CoASH. Has an acyl-CoA thioesterase activity towards the long chain fatty acyl-CoA thioester palmitoyl-CoA (hexadecanoyl-CoA; C16:0-CoA). Displays a substrate preference for fatty acyl-CoAs with chain-lengths C12-C18. Possesses beta-lactamase activity, catalyzing the hydrolysis of penicillin G and nitrocefin. Exhibits no activity towards other beta-lactam antibiotic classes including cephalosporins (cefotaxime) and carbapenems (imipenem). The sequence is that of Acyl-coenzyme A thioesterase MBLAC2 (MBLAC2) from Homo sapiens (Human).